A 192-amino-acid chain; its full sequence is Large ribosomal subunit protein uL5 (192 aa).

Belongs to the universal ribosomal protein uL5 family. As to quaternary structure, part of the 50S ribosomal subunit; part of the 5S rRNA/L5/L18/L25 subcomplex. Contacts the 5S rRNA and the P site tRNA. Forms a bridge to the 30S subunit in the 70S ribosome.

This is one of the proteins that bind and probably mediate the attachment of the 5S RNA into the large ribosomal subunit, where it forms part of the central protuberance. In the 70S ribosome it contacts protein S13 of the 30S subunit (bridge B1b), connecting the 2 subunits; this bridge is implicated in subunit movement. Contacts the P site tRNA; the 5S rRNA and some of its associated proteins might help stabilize positioning of ribosome-bound tRNAs. This chain is Large ribosomal subunit protein uL5, found in Mesorhizobium japonicum (strain LMG 29417 / CECT 9101 / MAFF 303099) (Mesorhizobium loti (strain MAFF 303099)).